A 496-amino-acid chain; its full sequence is Solute carrier family 2, facilitated glucose transporter member 11 (496 aa).

The Cytoplasmic segment spans residues 1 to 11 (MRALRRLIQGR). The chain crosses the membrane as a helical span at residues 12–32 (ILLLTICAAGIGGTFQFGYNL). Residues 33-61 (SIINAPTLHIQEFTNETWQARTGEPLPDH) lie on the Extracellular side of the membrane. Residue Asn-47 is glycosylated (N-linked (GlcNAc...) asparagine). Residues 62–82 (LVLLMWSLIVSLYPLGGLFGA) traverse the membrane as a helical segment. The Cytoplasmic portion of the chain corresponds to 83–97 (LLAGPLAITLGRKKS). The helical transmembrane segment at 98-118 (LLVNNIFVVSAAILFGFSRKA) threads the bilayer. Over 119-128 (GSFEMIMLGR) the chain is Extracellular. Residues 129 to 149 (LLVGVNAGVSMNIQPMYLGES) form a helical membrane-spanning segment. Residues 150–157 (APKELRGA) are Cytoplasmic-facing. The chain crosses the membrane as a helical span at residues 158–178 (VAMSSAIFTALGIVMGQVVGL). Topologically, residues 179–187 (RELLGGPQA) are extracellular. Residues 188–208 (WPLLLASCLVPGALQLASLPL) traverse the membrane as a helical segment. At 209 to 273 (LPESPRYLLI…LFQHRALRRQ (65 aa)) the chain is on the cytoplasmic side. Residues 274-294 (VTSLVVLGSAMELCGNDSVYA) form a helical membrane-spanning segment. Residues 295 to 311 (YASSVFRKAGVPEAKIQ) lie on the Extracellular side of the membrane. The helical transmembrane segment at 312–332 (YAIIGTGSCELLTAVVSCVVI) threads the bilayer. The Cytoplasmic segment spans residues 333–338 (ERVGRR). The chain crosses the membrane as a helical span at residues 339–359 (VLLIGGYSLMTCWGSIFTVAL). Residues 360-364 (CLQSS) are Extracellular-facing. The helical transmembrane segment at 365–385 (FPWTLYLAMACIFAFILSFGI) threads the bilayer. The Cytoplasmic segment spans residues 386 to 408 (GPAGVTGILATELFDQMARPAAC). The helical transmembrane segment at 409–429 (MVCGALMWIMLILVGLGFPFI) threads the bilayer. Residues 430–435 (MEALSH) lie on the Extracellular side of the membrane. A helical membrane pass occupies residues 436–456 (FLYVPFLGVCVCGAIYTGLFL). The Cytoplasmic segment spans residues 457–496 (PETKGKTFQEISKELHRLNFPRRAQGPTWRSLEVIQSTEL).

It belongs to the major facilitator superfamily. Sugar transporter (TC 2.A.1.1) family. Glucose transporter subfamily. In terms of tissue distribution, expressed in heart and skeletal muscle.

The protein localises to the cell membrane. It catalyses the reaction D-glucose(out) = D-glucose(in). Functionally, facilitative glucose transporter. The protein is Solute carrier family 2, facilitated glucose transporter member 11 of Homo sapiens (Human).